Here is a 732-residue protein sequence, read N- to C-terminus: Catalase-peroxidase (732 aa).

The segment at residues 97 to 220 is a cross-link (tryptophyl-tyrosyl-methioninium (Trp-Tyr) (with M-246)); the sequence is WHSAGTYRTS…LAAVQMGLIY (124 aa). Residue His98 is the Proton acceptor of the active site. Residues 220–246 constitute a cross-link (tryptophyl-tyrosyl-methioninium (Tyr-Met) (with W-97)); that stretch reads YVNPEGPDGNPDPVAAGRDIRETFARM. His261 is a binding site for heme b.

This sequence belongs to the peroxidase family. Peroxidase/catalase subfamily. In terms of assembly, homodimer or homotetramer. Heme b serves as cofactor. In terms of processing, formation of the three residue Trp-Tyr-Met cross-link is important for the catalase, but not the peroxidase activity of the enzyme.

The catalysed reaction is H2O2 + AH2 = A + 2 H2O. It catalyses the reaction 2 H2O2 = O2 + 2 H2O. Its function is as follows. Bifunctional enzyme with both catalase and broad-spectrum peroxidase activity. The protein is Catalase-peroxidase of Chlorobium phaeobacteroides (strain DSM 266 / SMG 266 / 2430).